We begin with the raw amino-acid sequence, 107 residues long: Large ribosomal subunit protein P2-A (107 aa).

The disordered stretch occupies residues 85-107 (GAAAPAAAAEEEEDDDMGFGLFD).

This sequence belongs to the eukaryotic ribosomal protein P1/P2 family. As to quaternary structure, P1 and P2 exist as dimers at the large ribosomal subunit. Post-translationally, phosphorylated.

Functionally, plays an important role in the elongation step of protein synthesis. In Trypanosoma cruzi, this protein is Large ribosomal subunit protein P2-A.